Here is a 223-residue protein sequence, read N- to C-terminus: Ribonuclease 3 (223 aa).

Positions 3 to 125 constitute an RNase III domain; sequence LERLQKKLSY…IIAAIYLDAG (123 aa). Residue Glu38 coordinates Mg(2+). Residue Asp42 is part of the active site. Residues Asp111 and Glu114 each contribute to the Mg(2+) site. Glu114 is an active-site residue. Residues 152–222 enclose the DRBM domain; sequence DPKTRLQEFL…AEQVLAKLTT (71 aa).

It belongs to the ribonuclease III family. As to quaternary structure, homodimer. Mg(2+) is required as a cofactor.

The protein resides in the cytoplasm. It carries out the reaction Endonucleolytic cleavage to 5'-phosphomonoester.. Functionally, digests double-stranded RNA. Involved in the processing of primary rRNA transcript to yield the immediate precursors to the large and small rRNAs (23S and 16S). Processes some mRNAs, and tRNAs when they are encoded in the rRNA operon. Processes pre-crRNA and tracrRNA of type II CRISPR loci if present in the organism. This Actinobacillus pleuropneumoniae serotype 5b (strain L20) protein is Ribonuclease 3.